Here is a 125-residue protein sequence, read N- to C-terminus: Ribosome maturation factor RimP (125 aa).

It belongs to the RimP family.

It is found in the cytoplasm. In terms of biological role, required for maturation of 30S ribosomal subunits. This Rickettsia canadensis (strain McKiel) protein is Ribosome maturation factor RimP.